A 168-amino-acid chain; its full sequence is Small ribosomal subunit protein uS5 (168 aa).

The region spanning Ile13–Val76 is the S5 DRBM domain.

This sequence belongs to the universal ribosomal protein uS5 family. In terms of assembly, part of the 30S ribosomal subunit. Contacts proteins S4 and S8.

Functionally, with S4 and S12 plays an important role in translational accuracy. In terms of biological role, located at the back of the 30S subunit body where it stabilizes the conformation of the head with respect to the body. This chain is Small ribosomal subunit protein uS5, found in Coxiella burnetii (strain RSA 493 / Nine Mile phase I).